A 1624-amino-acid chain; its full sequence is Putative serine/threonine-protein kinase/receptor R831 (1624 aa).

The N-terminal stretch at 1 to 25 (MHSVYTKYTIILILLVIYQGLPTNT) is a signal peptide. Asn-152, Asn-169, Asn-200, Asn-205, Asn-225, Asn-240, Asn-245, Asn-292, Asn-364, Asn-479, Asn-541, Asn-720, and Asn-737 each carry an N-linked (GlcNAc...) asparagine; by host glycan. Residues 747–767 (VIPIACIFGLLLLTLLIVIIF) traverse the membrane as a helical segment. Positions 786-1049 (LEIGETLGTG…EIMTRLSNIL (264 aa)) constitute a Protein kinase 1 domain. Residues 792–800 (LGTGGYGEV) and Lys-813 contribute to the ATP site. Asp-908 acts as the Proton acceptor in catalysis. Positions 1054-1093 (NMTSGTSSSSLSSGGIGKSITDSKSSNSRSSVESSNTSNT) are enriched in low complexity. The segment at 1054-1101 (NMTSGTSSSSLSSGGIGKSITDSKSSNSRSSVESSNTSNTFRGIDRHN) is disordered. The Guanylate cyclase domain occupies 1109–1252 (TVAFIDIISA…STVNITGKIT (144 aa)). Positions 1364–1615 (ISIGKQIGLG…MTEVVQQLML (252 aa)) constitute a Protein kinase 2 domain. ATP is bound by residues 1370–1378 (IGLGSYGIV) and Lys-1391. The active-site Proton acceptor is Asp-1487.

It localises to the membrane. The catalysed reaction is L-seryl-[protein] + ATP = O-phospho-L-seryl-[protein] + ADP + H(+). It catalyses the reaction L-threonyl-[protein] + ATP = O-phospho-L-threonyl-[protein] + ADP + H(+). This chain is Putative serine/threonine-protein kinase/receptor R831, found in Acanthamoeba polyphaga (Amoeba).